A 153-amino-acid chain; its full sequence is Ribosome maturation factor RimP (153 aa).

This sequence belongs to the RimP family.

The protein localises to the cytoplasm. Required for maturation of 30S ribosomal subunits. This is Ribosome maturation factor RimP from Nostoc sp. (strain PCC 7120 / SAG 25.82 / UTEX 2576).